Reading from the N-terminus, the 603-residue chain is UvrABC system protein C (603 aa).

One can recognise a GIY-YIG domain in the interval aspartate 15–isoleucine 92. The 36-residue stretch at alanine 197 to threonine 232 folds into the UVR domain.

The protein belongs to the UvrC family. In terms of assembly, interacts with UvrB in an incision complex.

It is found in the cytoplasm. In terms of biological role, the UvrABC repair system catalyzes the recognition and processing of DNA lesions. UvrC both incises the 5' and 3' sides of the lesion. The N-terminal half is responsible for the 3' incision and the C-terminal half is responsible for the 5' incision. The polypeptide is UvrABC system protein C (Limosilactobacillus reuteri (strain DSM 20016) (Lactobacillus reuteri)).